Here is a 576-residue protein sequence, read N- to C-terminus: MENMKVLLGFICLIVPLLSLETDKCTEYPNEVISFSSVNEIDIRSCPLTPNEMHGGTIIWYKNDSKTPISADKDSRIHQQNEHLWFVPAKMEDSGYYYCIMRNSTYCLKTKITMSVLENDPGLCYNTQASFIQRLHVAGDGSLVCPYLDFFKDENNELPKVQWYKNCKPLPLDDGNFFGFKNKLMVMNVAEEHRGNYTCRTSYTYQGKQYPVTRVITFITIDDSKRDRPVIMSPRNETMEADPGSTIQLICNVTGQFTDLVYWKWNGSEIEWDDPILAEDYQFLEHPSAKRKYTLITTLNVSEVKSQFYRYPFICFVKNTHILETAHVRLVYPVPDFKNYLIGGFAIFTATAVFCACIYKVFKVDIVLWYRDSCSDFLPRKASDGRTYDAYVLYPKTYGEGSFAYLDTFVFKLLPEVLEGQFGYKLFICGRDDYVGEDTIEVTNENVKRSRRLIIILVRDMGSFSCLGQSSEEQIAIYDALIREGIKIILLELEKIQDYEKMPESIQFIKQKHGAICWSGDFKERPQSAKTRFWKNLRYQMPAQRRSPLSKHHLLTLDPVLDTKEKLQAETHLPLG.

The N-terminal stretch at 1-19 is a signal peptide; that stretch reads MENMKVLLGFICLIVPLLS. 3 consecutive Ig-like C2-type domains span residues 20-115, 121-217, and 229-331; these read LETD…ITMS, PGLC…RVIT, and PVIM…VRLV. Topologically, residues 20–338 are extracellular; it reads LETDKCTEYP…RLVYPVPDFK (319 aa). Disulfide bonds link Cys-25–Cys-107, Cys-46–Cys-99, and Cys-145–Cys-199. Residues Asn-63 and Asn-103 are each glycosylated (N-linked (GlcNAc...) asparagine). N-linked (GlcNAc...) asparagine glycosylation is found at Asn-236, Asn-252, and Asn-266. Cys-251 and Cys-315 form a disulfide bridge. Residues 339-359 form a helical membrane-spanning segment; it reads NYLIGGFAIFTATAVFCACIY. Residues 360-576 lie on the Cytoplasmic side of the membrane; it reads KVFKVDIVLW…LQAETHLPLG (217 aa). The 156-residue stretch at 386–541 folds into the TIR domain; the sequence is RTYDAYVLYP…RFWKNLRYQM (156 aa). Glu-473 is an active-site residue. Tyr-499 carries the post-translational modification Phosphotyrosine. Thr-556 carries the phosphothreonine; by PKC modification.

This sequence belongs to the interleukin-1 receptor family. As to quaternary structure, the interleukin-1 receptor complex is a heterodimer of IL1R1 and IL1RAP. Interacts with PIK3R1. Interacts with IL1A. Post-translationally, a soluble form (sIL1R1) is probably produced by proteolytic cleavage at the cell surface (shedding). Rapidly phosphorylated on Tyr-499 in response to IL-1, which creates a SH2 binding site for the PI 3-kinase regulatory subunit PIK3R1.

The protein resides in the membrane. The protein localises to the cell membrane. It localises to the secreted. The catalysed reaction is NAD(+) + H2O = ADP-D-ribose + nicotinamide + H(+). In terms of biological role, receptor for IL1A, IL1B and IL1RN. After binding to interleukin-1 associates with the coreceptor IL1RAP to form the high affinity interleukin-1 receptor complex which mediates interleukin-1-dependent activation of NF-kappa-B, MAPK and other pathways. Signaling involves the recruitment of adapter molecules such as TOLLIP, MYD88, and IRAK1 or IRAK2 via the respective TIR domains of the receptor/coreceptor subunits. Binds ligands with comparable affinity and binding of antagonist IL1RN prevents association with IL1RAP to form a signaling complex. Involved in IL1B-mediated costimulation of IFNG production from T-helper 1 (Th1) cells. This is Interleukin-1 receptor type 1 (Il1r1) from Rattus norvegicus (Rat).